The primary structure comprises 603 residues: Phosphoenolpyruvate carboxykinase [GTP] (603 aa).

Substrate-binding positions include Arg-87 and 209–211 (YAG). Mn(2+) contacts are provided by Lys-218 and His-237. Ser-258 contacts substrate. Residue 259 to 264 (GSGKTS) participates in GTP binding. Ser-260 is a catalytic residue. Mn(2+) is bound at residue Asp-275. Substrate is bound at residue 365 to 367 (NAR). Positions 367 and 398 each coordinate GTP.

Belongs to the phosphoenolpyruvate carboxykinase [GTP] family. It depends on Mn(2+) as a cofactor.

Its subcellular location is the cytoplasm. The catalysed reaction is oxaloacetate + GTP = phosphoenolpyruvate + GDP + CO2. It participates in carbohydrate biosynthesis; gluconeogenesis. Its function is as follows. Catalyzes the conversion of oxaloacetate (OAA) to phosphoenolpyruvate (PEP), the rate-limiting step in the metabolic pathway that produces glucose from lactate and other precursors derived from the citric acid cycle. The chain is Phosphoenolpyruvate carboxykinase [GTP] from Saccharolobus solfataricus (strain ATCC 35092 / DSM 1617 / JCM 11322 / P2) (Sulfolobus solfataricus).